A 353-amino-acid chain; its full sequence is Sesquiterpene synthase Agr8 (353 aa).

Mg(2+) contacts are provided by aspartate 82, asparagine 220, serine 224, and glutamate 228. A DDXXD motif motif is present at residues 82-86 (DEYTD). Positions 309 and 310 each coordinate (2E,6E)-farnesyl diphosphate.

It belongs to the terpene synthase family. Mg(2+) is required as a cofactor.

The enzyme catalyses (2E,6E)-farnesyl diphosphate = gamma-muurolene + diphosphate. It catalyses the reaction (2E,6E)-farnesyl diphosphate = alpha-selinene + diphosphate. It carries out the reaction (2E,6E)-farnesyl diphosphate = delta-cadinene + diphosphate. In terms of biological role, terpene cyclase that catalyzes the cyclization of farnesyl diphosphate (FPP) to various sesquiterpenes, including beta-elemene, gamma-muurolene, alpha-selinene, beta-selinene, beta-cadinene, delta-cadinene and alpha-cadinol. This chain is Sesquiterpene synthase Agr8, found in Cyclocybe aegerita (Black poplar mushroom).